The chain runs to 165 residues: MAFSRLSFAASLIVFSSLIISSVAYYGNEADPETGKLIPIAVEGIIKCKSGGKTYPIQGATARIACVKVDAYGNELVPISILSSKTDAKGYFIATIFPSQLRAGRTVTKCKTYLYKSPLADCDFPTDVNKGVRGQPLSTYRILQDKSFKLYWAGPFFYTSEPTYY.

A signal peptide spans 1 to 24 (MAFSRLSFAASLIVFSSLIISSVA).

This sequence belongs to the plant proline-rich protein superfamily. As to expression, root hair and seed specific expression. Also observed in other tissues including siliques, roots and flowers.

It localises to the secreted. The protein localises to the cell wall. Its function is as follows. Contributes to cell wall structure in root hairs and seeds, especially in phosphate (Pi) deprivation conditions or in the presence of ethylene. Particularly important in maternal tissues (pericarps and seed coats) during seed development, especially under stress conditions. Confers thermotolerance in seed germination rate. This chain is Protein SEED AND ROOT HAIR PROTECTIVE PROTEIN, found in Arabidopsis thaliana (Mouse-ear cress).